The chain runs to 571 residues: Streptolysin O (571 aa).

An N-terminal signal peptide occupies residues 1-33 (MSNKKTFKKYSRVAGLLTVALIIGNLVTANAES). 2 disordered regions span residues 32–56 (ESNK…ESSE) and 81–108 (KEMP…HTEE). Residues 37–48 (NTASTETTTTNE) are compositionally biased toward low complexity. The next 4 membrane-spanning stretches (beta stranded) occupy residues 260 to 273 (KSQI…NSKI), 280 to 289 (IDFKSISKGE), 358 to 367 (SNDVEAAFSA), and 375 to 387 (KTNG…LENS). The short motif at 529–539 (ECTGLAWEWWR) is the Conserved undecapeptide element. A short sequence motif (cholesterol binding) is located at residue T561.

The protein belongs to the cholesterol-dependent cytolysin family. Homooligomeric pore complex of 35 to 50 subunits; when inserted in the host membrane.

The protein resides in the secreted. It is found in the host cell membrane. Its function is as follows. A cholesterol-dependent toxin that causes cytolysis by forming pores in cholesterol containing host membranes. After binding to target membranes, the protein undergoes a major conformation change, leading to its insertion in the host membrane and formation of an oligomeric pore complex. Cholesterol is required for binding to host membranes, membrane insertion and pore formation; cholesterol binding is mediated by a Thr-Leu pair in the C-terminus. Can be reversibly inactivated by oxidation. The protein is Streptolysin O (slo) of Streptococcus pyogenes serotype M6 (strain ATCC BAA-946 / MGAS10394).